The sequence spans 263 residues: Proliferating cell nuclear antigen (263 aa).

Residues 61-80 (RCDRTINLGLSLANMSKALK) mediate DNA binding.

The protein belongs to the PCNA family. As to quaternary structure, homotrimer. Forms a complex with activator 1 heteropentamer in the presence of ATP.

It is found in the nucleus. Its function is as follows. This protein is an auxiliary protein of DNA polymerase delta and is involved in the control of eukaryotic DNA replication by increasing the polymerase's processibility during elongation of the leading strand. In Caenorhabditis elegans, this protein is Proliferating cell nuclear antigen (pcn-1).